The sequence spans 682 residues: L-type lectin-domain containing receptor kinase VI.2 (682 aa).

An N-terminal signal peptide occupies residues 1-26 (MGTQRSMFIVSFLFKLFLFLSVHVRA). The Extracellular portion of the chain corresponds to 27–310 (QRTTTNFAFR…AKKEGLNSQV (284 aa)). The interval 29–277 (TTTNFAFRGF…AHYVMGWSFS (249 aa)) is legume-lectin like. A helical transmembrane segment spans residues 311-331 (IVMIVALSAVMLVMLVLLFFF). Residues 332–682 (VMYKKRLGQE…RVSSTSRISQ (351 aa)) are Cytoplasmic-facing. Residues 367-641 (FKKTGIIGTG…LRYLNGEENV (275 aa)) enclose the Protein kinase domain. ATP is bound by residues 373–381 (IGTGGFGTV) and Lys-395. The Proton acceptor role is filled by Asp-494.

It in the C-terminal section; belongs to the protein kinase superfamily. Ser/Thr protein kinase family. In the N-terminal section; belongs to the leguminous lectin family. As to expression, strongly expressed in the vascular system and trichomes of the leaves. Also expressed in guard cells, anthers, stigmas and germinating seeds, but not found in petals or roots. Increased susceptibility to the bacteria Pseudomonas syringae, characterized by stronger necrotic symptoms and higher bacterial proliferation.

It is found in the cell membrane. It catalyses the reaction L-seryl-[protein] + ATP = O-phospho-L-seryl-[protein] + ADP + H(+). The enzyme catalyses L-threonyl-[protein] + ATP = O-phospho-L-threonyl-[protein] + ADP + H(+). Its function is as follows. Involved in negative regulation of abscisic acid response in seed germination. Involved in resistance response to the pathogenic bacteria Pseudomonas syringae. The sequence is that of L-type lectin-domain containing receptor kinase VI.2 from Arabidopsis thaliana (Mouse-ear cress).